The primary structure comprises 155 residues: Putative pre-16S rRNA nuclease (155 aa).

The protein belongs to the YqgF nuclease family.

The protein localises to the cytoplasm. Could be a nuclease involved in processing of the 5'-end of pre-16S rRNA. The protein is Putative pre-16S rRNA nuclease of Corynebacterium jeikeium (strain K411).